The sequence spans 255 residues: Probable transcriptional regulatory protein Rcas_0718 (255 aa).

Belongs to the TACO1 family.

Its subcellular location is the cytoplasm. This chain is Probable transcriptional regulatory protein Rcas_0718, found in Roseiflexus castenholzii (strain DSM 13941 / HLO8).